The following is a 209-amino-acid chain: Large ribosomal subunit protein uL3 (209 aa).

A disordered region spans residues 132 to 153; the sequence is ATHGNSLSHRVPGSIGQNQTPG. Q150 is subject to N5-methylglutamine.

The protein belongs to the universal ribosomal protein uL3 family. In terms of assembly, part of the 50S ribosomal subunit. Forms a cluster with proteins L14 and L19. Post-translationally, methylated by PrmB.

In terms of biological role, one of the primary rRNA binding proteins, it binds directly near the 3'-end of the 23S rRNA, where it nucleates assembly of the 50S subunit. In Enterobacter sp. (strain 638), this protein is Large ribosomal subunit protein uL3.